The following is a 480-amino-acid chain: MNFETVIGLEVHVELNTNSKIFSPSSAHFGQEQNANTNVIDWSFPGVLPVMNKGVVDAGIKAALALNMDIHQNMHFDRKNYFYPDNPKAYQISQFDEPIGYNGWIEIELEDGTRKKIRIERAHLEEDAGKNTHGTDGYSYVDLNRQGVPLIEIVSEADMRSPEEAYAYLTALKEIIQYTGISDVKMEEGSMRVDANISLRPYGQEEFGTKAELKNLNSFNNVRKGLIHEEKRQAQVLRSGGQIQQETRRFDETTGETILMRVKEGSSDYRYFPEPDLPLFDISDEWIDQVRLELPEFPQERRAKYVSSFGLSSYDASQLTATKATSDFFEKAVAIGGDAKQVSNWLQGEVAQFLNSESKSIEEIGLTPENLVEMISLIADGTISSKIAKKVFVHLAKNGGSAEEFVKKAGLVQISDPEVLIPIIHQVFADNEAAVIDFKSGKRNADKAFTGYLMKATKGQANPQVALKLLAQELAKLKEE.

The protein belongs to the GatB/GatE family. GatB subfamily. As to quaternary structure, heterotrimer of A, B and C subunits.

The enzyme catalyses L-glutamyl-tRNA(Gln) + L-glutamine + ATP + H2O = L-glutaminyl-tRNA(Gln) + L-glutamate + ADP + phosphate + H(+). It catalyses the reaction L-aspartyl-tRNA(Asn) + L-glutamine + ATP + H2O = L-asparaginyl-tRNA(Asn) + L-glutamate + ADP + phosphate + 2 H(+). In terms of biological role, allows the formation of correctly charged Asn-tRNA(Asn) or Gln-tRNA(Gln) through the transamidation of misacylated Asp-tRNA(Asn) or Glu-tRNA(Gln) in organisms which lack either or both of asparaginyl-tRNA or glutaminyl-tRNA synthetases. The reaction takes place in the presence of glutamine and ATP through an activated phospho-Asp-tRNA(Asn) or phospho-Glu-tRNA(Gln). The polypeptide is Aspartyl/glutamyl-tRNA(Asn/Gln) amidotransferase subunit B (Streptococcus agalactiae serotype III (strain NEM316)).